A 623-amino-acid chain; its full sequence is Leucine aminopeptidase 2 (623 aa).

A peptide is bound by residues 136–138 (QCQ) and 273–278 (PYGGME). H302 is a Zn(2+) binding site. The active-site Proton acceptor is the E303. Zn(2+) contacts are provided by H306 and E325. Catalysis depends on Y390, which acts as the Proton donor.

The protein belongs to the peptidase M1 family. Requires Zn(2+) as cofactor.

It localises to the cytoplasm. The protein localises to the nucleus. The catalysed reaction is an epoxide + H2O = an ethanediol. Aminopeptidase that preferentially cleaves di- and tripeptides. Also has low epoxide hydrolase activity (in vitro). Can hydrolyze the epoxide leukotriene LTA(4) but it forms preferentially 5,6-dihydroxy-7,9,11,14-eicosatetraenoic acid rather than the cytokine leukotriene B(4) as the product compared to the homologous mammalian enzyme (in vitro). This Phaeosphaeria nodorum (strain SN15 / ATCC MYA-4574 / FGSC 10173) (Glume blotch fungus) protein is Leucine aminopeptidase 2.